Consider the following 568-residue polypeptide: Protein NDNF (568 aa).

A signal peptide spans 1–19 (MELFYWCLLCLLLPLTSRT). Fibronectin type-III domains follow at residues 261-331 (NLGK…VGAF) and 445-564 (PSLP…IVKT). N-linked (GlcNAc...) asparagine glycosylation is found at Asn-322 and Asn-488.

Binds heparin and chondroitin sulfate. O-glycosylated; contains heparan sulfate and chondroitin sulfate. In terms of processing, N-glycosylated. As to expression, expressed in brain and spinal cord with no expression detected in heart, kidney or liver. Expressed by neurons but not by astrocytes. In the brain, detected in the cerebrum, cerebellum and olfactory bulbs. In the cerebral cortex, highly expressed in Cajal-Retzius cells. Also expressed in hippocampal neurons and in Purkinje and granule cells of the cerebellum (at protein level). Expressed in neurons along the GnRH migratory route.

It is found in the secreted. Functionally, secretory protein that plays a role in various cellular processes. Acts as a chemorepellent acting on gonadotropin-releasing hormone (GnRH) expressing neurons regulating their migration to the hypothalamus. Also promotes neuron migration, growth and survival as well as neurite outgrowth and is involved in the development of the olfactory system. May also act through the regulation of growth factors activity and downstream signaling. Also regulates extracellular matrix assembly and cell adhesiveness. Promotes endothelial cell survival, vessel formation and plays an important role in the process of revascularization through NOS3-dependent mechanisms. This Mus musculus (Mouse) protein is Protein NDNF (Ndnf).